The primary structure comprises 875 residues: Valine--tRNA ligase (875 aa).

Positions Pro45–His55 match the 'HIGH' region motif. The 'KMSKS' region signature appears at Lys524 to Ser528. Lys527 contacts ATP. Residues Val803–Glu837 adopt a coiled-coil conformation.

Belongs to the class-I aminoacyl-tRNA synthetase family. ValS type 1 subfamily. Monomer.

Its subcellular location is the cytoplasm. The catalysed reaction is tRNA(Val) + L-valine + ATP = L-valyl-tRNA(Val) + AMP + diphosphate. Catalyzes the attachment of valine to tRNA(Val). As ValRS can inadvertently accommodate and process structurally similar amino acids such as threonine, to avoid such errors, it has a 'posttransfer' editing activity that hydrolyzes mischarged Thr-tRNA(Val) in a tRNA-dependent manner. The polypeptide is Valine--tRNA ligase (Borrelia garinii subsp. bavariensis (strain ATCC BAA-2496 / DSM 23469 / PBi) (Borreliella bavariensis)).